Reading from the N-terminus, the 191-residue chain is UPF0228 protein MM_1428 (191 aa).

Belongs to the UPF0228 family.

The chain is UPF0228 protein MM_1428 from Methanosarcina mazei (strain ATCC BAA-159 / DSM 3647 / Goe1 / Go1 / JCM 11833 / OCM 88) (Methanosarcina frisia).